Reading from the N-terminus, the 151-residue chain is SsrA-binding protein (151 aa).

Belongs to the SmpB family.

The protein localises to the cytoplasm. In terms of biological role, required for rescue of stalled ribosomes mediated by trans-translation. Binds to transfer-messenger RNA (tmRNA), required for stable association of tmRNA with ribosomes. tmRNA and SmpB together mimic tRNA shape, replacing the anticodon stem-loop with SmpB. tmRNA is encoded by the ssrA gene; the 2 termini fold to resemble tRNA(Ala) and it encodes a 'tag peptide', a short internal open reading frame. During trans-translation Ala-aminoacylated tmRNA acts like a tRNA, entering the A-site of stalled ribosomes, displacing the stalled mRNA. The ribosome then switches to translate the ORF on the tmRNA; the nascent peptide is terminated with the 'tag peptide' encoded by the tmRNA and targeted for degradation. The ribosome is freed to recommence translation, which seems to be the essential function of trans-translation. The polypeptide is SsrA-binding protein (Chlamydia muridarum (strain MoPn / Nigg)).